Here is a 301-residue protein sequence, read N- to C-terminus: Phosphatidylserine decarboxylase proenzyme (301 aa).

Residues D117, H173, and S260 each act as charge relay system; for autoendoproteolytic cleavage activity in the active site. Catalysis depends on S260, which acts as the Schiff-base intermediate with substrate; via pyruvic acid; for decarboxylase activity. S260 carries the pyruvic acid (Ser); by autocatalysis modification.

The protein belongs to the phosphatidylserine decarboxylase family. PSD-B subfamily. Prokaryotic type II sub-subfamily. In terms of assembly, heterodimer of a large membrane-associated beta subunit and a small pyruvoyl-containing alpha subunit. Pyruvate serves as cofactor. In terms of processing, is synthesized initially as an inactive proenzyme. Formation of the active enzyme involves a self-maturation process in which the active site pyruvoyl group is generated from an internal serine residue via an autocatalytic post-translational modification. Two non-identical subunits are generated from the proenzyme in this reaction, and the pyruvate is formed at the N-terminus of the alpha chain, which is derived from the carboxyl end of the proenzyme. The autoendoproteolytic cleavage occurs by a canonical serine protease mechanism, in which the side chain hydroxyl group of the serine supplies its oxygen atom to form the C-terminus of the beta chain, while the remainder of the serine residue undergoes an oxidative deamination to produce ammonia and the pyruvoyl prosthetic group on the alpha chain. During this reaction, the Ser that is part of the protease active site of the proenzyme becomes the pyruvoyl prosthetic group, which constitutes an essential element of the active site of the mature decarboxylase.

It is found in the cell membrane. The catalysed reaction is a 1,2-diacyl-sn-glycero-3-phospho-L-serine + H(+) = a 1,2-diacyl-sn-glycero-3-phosphoethanolamine + CO2. It functions in the pathway phospholipid metabolism; phosphatidylethanolamine biosynthesis; phosphatidylethanolamine from CDP-diacylglycerol: step 2/2. Its function is as follows. Catalyzes the formation of phosphatidylethanolamine (PtdEtn) from phosphatidylserine (PtdSer). The chain is Phosphatidylserine decarboxylase proenzyme from Chlamydia muridarum (strain MoPn / Nigg).